The sequence spans 292 residues: 11-beta-hydroxysteroid dehydrogenase 1 (292 aa).

The Cytoplasmic segment spans residues 1-7; that stretch reads MAFMKKY. A helical; Signal-anchor for type II membrane protein transmembrane segment spans residues 8–24; that stretch reads LLPILGLFMAYYYYSAN. The Lumenal segment spans residues 25-292; the sequence is EEFRPEMLQG…SYNMDRFINK (268 aa). Residues 41–67, 92–93, and 119–121 contribute to the NADP(+) site; these read GASK…TARS, TM, and NHI. N-linked (GlcNAc...) asparagine glycans are attached at residues N123 and N162. S170 serves as a coordination point for substrate. Catalysis depends on Y183, which acts as the Proton acceptor. 183–187 serves as a coordination point for NADP(+); that stretch reads YSASK. N207 carries an N-linked (GlcNAc...) asparagine glycan. NADP(+) is bound at residue 218–222; it reads IDTET.

The protein belongs to the short-chain dehydrogenases/reductases (SDR) family. Homodimer. Post-translationally, glycosylated. Widely expressed, highest expression in liver, lower in testis, ovary, lung, foreskin fibroblasts, and much lower in kidney. Expressed in liver (at protein level). Expressed in the basal cells of the corneal epithelium and in the ciliary nonpigmented epithelium (both at mRNA and at protein level).

The protein localises to the endoplasmic reticulum membrane. It catalyses the reaction an 11beta-hydroxysteroid + NADP(+) = an 11-oxosteroid + NADPH + H(+). The enzyme catalyses cortisone + NADPH + H(+) = cortisol + NADP(+). It carries out the reaction corticosterone + NADP(+) = 11-dehydrocorticosterone + NADPH + H(+). The catalysed reaction is a 7beta-hydroxysteroid + NADP(+) = a 7-oxosteroid + NADPH + H(+). It catalyses the reaction 7-oxocholesterol + NADPH + H(+) = 7beta-hydroxycholesterol + NADP(+). The enzyme catalyses chenodeoxycholate + NADP(+) = 7-oxolithocholate + NADPH + H(+). It carries out the reaction 7-oxolithocholate + NADPH + H(+) = ursodeoxycholate + NADP(+). The catalysed reaction is glycochenodeoxycholate + NADP(+) = 7-oxoglycolithocholate + NADPH + H(+). It catalyses the reaction taurochenodeoxycholate + NADP(+) = 7-oxotaurolithocholate + NADPH + H(+). The enzyme catalyses tauroursodeoxycholate + NADP(+) = 7-oxotaurolithocholate + NADPH + H(+). It carries out the reaction glycoursodeoxycholate + NADP(+) = 7-oxoglycolithocholate + NADPH + H(+). The catalysed reaction is 7-oxopregnenolone + NADPH + H(+) = 7beta-hydroxypregnenolone + NADP(+). It catalyses the reaction 3beta,7alpha-dihydroxyandrost-5-en-17-one + NADP(+) = 3beta-hydroxy-5-androstene-7,17-dione + NADPH + H(+). The enzyme catalyses 3beta-hydroxy-5-androstene-7,17-dione + NADPH + H(+) = 3beta,7beta-dihydroxyandrost-5-en-17-one + NADP(+). It carries out the reaction 3beta-hydroxy-5alpha-androstane-7,17-dione + NADPH + H(+) = 3beta,7beta-dihydroxy-5alpha-androstan-17-one + NADP(+). Its pathway is steroid metabolism. Its activity is regulated as follows. Hexose-6-phosphate dehydrogenase (H6PD) provides cosubstrate NADPH, and the glucose-6-phosphate transporter in the ER-membrane supplies the substrate for H6PDH, their activities stimulate the reduction of cortisone and abolish the oxidation of cortisol. Its function is as follows. Controls the reversible conversion of biologically active glucocorticoids such as cortisone to cortisol, and 11-dehydrocorticosterone to corticosterone in the presence of NADP(H). Participates in the corticosteroid receptor-mediated anti-inflammatory response, as well as metabolic and homeostatic processes. Plays a role in the secretion of aqueous humor in the eye, maintaining a normotensive, intraocular environment. Bidirectional in vitro, predominantly functions as a reductase in vivo, thereby increasing the concentration of active glucocorticoids. It has broad substrate specificity, besides glucocorticoids, it accepts other steroid and sterol substrates. Interconverts 7-oxo- and 7-hydroxy-neurosteroids such as 7-oxopregnenolone and 7beta-hydroxypregnenolone, 7-oxodehydroepiandrosterone (3beta-hydroxy-5-androstene-7,17-dione) and 7beta-hydroxydehydroepiandrosterone (3beta,7beta-dihydroxyandrost-5-en-17-one), among others. Catalyzes the stereo-specific conversion of the major dietary oxysterol, 7-ketocholesterol (7-oxocholesterol), into the more polar 7-beta-hydroxycholesterol metabolite. 7-oxocholesterol is one of the most important oxysterols, it participates in several events such as induction of apoptosis, accumulation in atherosclerotic lesions, lipid peroxidation, and induction of foam cell formation. Mediates the 7-oxo reduction of 7-oxolithocholate mainly to chenodeoxycholate, and to a lesser extent to ursodeoxycholate, both in its free form and when conjugated to glycine or taurine, providing a link between glucocorticoid activation and bile acid metabolism. Catalyzes the synthesis of 7-beta-25-dihydroxycholesterol from 7-oxo-25-hydroxycholesterol in vitro, which acts as a ligand for the G-protein-coupled receptor (GPCR) Epstein-Barr virus-induced gene 2 (EBI2) and may thereby regulate immune cell migration. This is 11-beta-hydroxysteroid dehydrogenase 1 from Homo sapiens (Human).